The primary structure comprises 227 residues: Cysteine-rich hydrophobic domain-containing protein 1 (227 aa).

A disordered region spans residues 1–84 (MSILLPNMAE…PPRVVSEEHL (84 aa)). The span at 13-23 (TISELEEEEEA) shows a compositional bias: acidic residues. Low complexity predominate over residues 24-44 (ATSSSSPSSSPSSSSSSSVSG). Residues 45–72 (PDEDEEDEEEEEEEDEEEEDEEEEEEEV) show a composition bias toward acidic residues. The stretch at 46–73 (DEDEEDEEEEEEEDEEEEDEEEEEEEVP) forms a coiled coil.

Belongs to the CHIC family. In terms of processing, palmitoylated. As to expression, expressed moderately in the brain.

It is found in the cell membrane. The protein resides in the cytoplasmic vesicle. The sequence is that of Cysteine-rich hydrophobic domain-containing protein 1 (Chic1) from Mus musculus (Mouse).